A 297-amino-acid polypeptide reads, in one-letter code: Aspartate dehydrogenase domain-containing protein (297 aa).

2 positions are modified to phosphoserine: Ser24 and Ser172.

This sequence belongs to the L-aspartate dehydrogenase family.

This Rattus norvegicus (Rat) protein is Aspartate dehydrogenase domain-containing protein.